A 357-amino-acid chain; its full sequence is Alanine racemase (357 aa).

Residue Lys35 is the Proton acceptor; specific for D-alanine of the active site. An N6-(pyridoxal phosphate)lysine modification is found at Lys35. Arg131 lines the substrate pocket. The Proton acceptor; specific for L-alanine role is filled by Tyr256. Met304 serves as a coordination point for substrate.

Belongs to the alanine racemase family. It depends on pyridoxal 5'-phosphate as a cofactor.

It catalyses the reaction L-alanine = D-alanine. It functions in the pathway amino-acid biosynthesis; D-alanine biosynthesis; D-alanine from L-alanine: step 1/1. Its function is as follows. Catalyzes the interconversion of L-alanine and D-alanine. May also act on other amino acids. The protein is Alanine racemase (alr) of Legionella pneumophila (strain Lens).